The following is a 119-amino-acid chain: Large ribosomal subunit protein bL20c (119 aa).

This sequence belongs to the bacterial ribosomal protein bL20 family.

It localises to the plastid. Its subcellular location is the chloroplast. Binds directly to 23S ribosomal RNA and is necessary for the in vitro assembly process of the 50S ribosomal subunit. It is not involved in the protein synthesizing functions of that subunit. This chain is Large ribosomal subunit protein bL20c, found in Triticum aestivum (Wheat).